The sequence spans 226 residues: V-type proton ATPase subunit E (226 aa).

The protein belongs to the V-ATPase E subunit family. In terms of assembly, V-ATPase is a heteromultimeric enzyme composed of a peripheral catalytic V1 complex (components A to H) attached to an integral membrane V0 proton pore complex (components: a, c, c', c'', d, e, f and VOA1).

The protein resides in the vacuole membrane. Its function is as follows. Subunit of the V1 complex of vacuolar(H+)-ATPase (V-ATPase), a multisubunit enzyme composed of a peripheral complex (V1) that hydrolyzes ATP and a membrane integral complex (V0) that translocates protons. V-ATPase is responsible for acidifying and maintaining the pH of intracellular compartments. The chain is V-type proton ATPase subunit E (VMA4) from Candida albicans (Yeast).